We begin with the raw amino-acid sequence, 400 residues long: uncharacterized protein (400 aa).

Over residues S112–L126 the composition is skewed to basic and acidic residues. Residues S112 to K151 are disordered.

This is an uncharacterized protein from Homo sapiens (Human).